We begin with the raw amino-acid sequence, 130 residues long: Small ribosomal subunit protein uS11 (130 aa).

It belongs to the universal ribosomal protein uS11 family. In terms of assembly, part of the 30S ribosomal subunit. Interacts with proteins S7 and S18. Binds to IF-3.

Located on the platform of the 30S subunit, it bridges several disparate RNA helices of the 16S rRNA. Forms part of the Shine-Dalgarno cleft in the 70S ribosome. The protein is Small ribosomal subunit protein uS11 of Prochlorococcus marinus (strain MIT 9303).